The sequence spans 302 residues: Protoheme IX farnesyltransferase (302 aa).

9 helical membrane passes run 24–44 (VVSL…FSGY), 48–68 (FFSV…AGAL), 97–117 (AALV…ELAV), 120–140 (LSAV…TVYL), 147–167 (NIVV…AAVA), 174–194 (SLVL…ALAL), 221–241 (ILCY…LRFS), 245–265 (YMIV…NVYL), and 282–302 (FLLF…GMLI).

This sequence belongs to the UbiA prenyltransferase family. Protoheme IX farnesyltransferase subfamily.

It is found in the cell inner membrane. It carries out the reaction heme b + (2E,6E)-farnesyl diphosphate + H2O = Fe(II)-heme o + diphosphate. The protein operates within porphyrin-containing compound metabolism; heme O biosynthesis; heme O from protoheme: step 1/1. Its function is as follows. Converts heme B (protoheme IX) to heme O by substitution of the vinyl group on carbon 2 of heme B porphyrin ring with a hydroxyethyl farnesyl side group. This Neorickettsia sennetsu (strain ATCC VR-367 / Miyayama) (Ehrlichia sennetsu) protein is Protoheme IX farnesyltransferase.